We begin with the raw amino-acid sequence, 399 residues long: Formate-dependent phosphoribosylglycinamide formyltransferase (399 aa).

N(1)-(5-phospho-beta-D-ribosyl)glycinamide contacts are provided by residues 21 to 22 (EL) and E81. Residues R114, K156, 161–166 (SSGKGQ), 196–199 (EGFI), and E204 contribute to the ATP site. Residues 119 to 314 (RLAAEELGLP…EFELHARAIL (196 aa)) enclose the ATP-grasp domain. Mg(2+)-binding residues include E273 and E285. Residues D292, K361, and 368–369 (RR) each bind N(1)-(5-phospho-beta-D-ribosyl)glycinamide. The segment at 370 to 399 (MGVAVANGESTDQARERAKLAASKVRPTRT) is disordered.

It belongs to the PurK/PurT family. Homodimer.

It carries out the reaction N(1)-(5-phospho-beta-D-ribosyl)glycinamide + formate + ATP = N(2)-formyl-N(1)-(5-phospho-beta-D-ribosyl)glycinamide + ADP + phosphate + H(+). Its pathway is purine metabolism; IMP biosynthesis via de novo pathway; N(2)-formyl-N(1)-(5-phospho-D-ribosyl)glycinamide from N(1)-(5-phospho-D-ribosyl)glycinamide (formate route): step 1/1. In terms of biological role, involved in the de novo purine biosynthesis. Catalyzes the transfer of formate to 5-phospho-ribosyl-glycinamide (GAR), producing 5-phospho-ribosyl-N-formylglycinamide (FGAR). Formate is provided by PurU via hydrolysis of 10-formyl-tetrahydrofolate. This Dechloromonas aromatica (strain RCB) protein is Formate-dependent phosphoribosylglycinamide formyltransferase.